A 581-amino-acid polypeptide reads, in one-letter code: Activating signal cointegrator 1 (581 aa).

N-acetylalanine is present on alanine 2. The interval 97-118 (KSGDHLKRGRKKGRNRQEVPAF) is disordered. The C4-type zinc finger occupies 171-187 (CDCLGQKHKLINNCLIC). The tract at residues 200 to 300 (CLFCGTLVCT…ASDSNQWLSK (101 aa)) is mediates interaction with DDRGK1. Serine 276 is modified (phosphoserine). A Phosphotyrosine modification is found at tyrosine 289. A mediates interaction with UFL1 region spans residues 300 to 400 (KLERETLQKR…WVDHTGAASQ (101 aa)). Glycyl lysine isopeptide (Lys-Gly) (interchain with G-Cter in UFM1) cross-links involve residues lysine 324, lysine 325, and lysine 334. Position 341 is a phosphoserine (serine 341). A Glycyl lysine isopeptide (Lys-Gly) (interchain with G-Cter in UFM1) cross-link involves residue lysine 367. An ASCH domain is found at 437–531 (LSVHQPWASL…FKEQFPDISQ (95 aa)).

In terms of assembly, interacts with the thyroid hormone receptor/TR (via the ligand-binding domain); this interaction requires the presence of thyroid hormone. Interacts with the androgen receptor/AR; in an androgen, testosterone and dihydrotestosterone-dependent manner. Interacts with ESR1 (estrogen ligand-bound); competes with UFSP2. Interacts with UFSP2; competes with ligand-bound ESR1. Interacts with DDRGK1 and UFL1; the interaction with DDRGK1 is direct. Interacts with NCOA1. Interacts with EP300. Part of the ASC-1 complex, that contains TRIP4, ASCC1, ASCC2 and ASCC3. Identified in the RQT (ribosome quality control trigger) complex, that contains ASCC2, ASCC3 and TRIP4. Interacts with NEK6. Interacts with CSRP1. Interacts with ZCCHC4. Post-translationally, phosphorylated by NEK6. In terms of processing, polyufmylated by the UFM1-conjugating system composed of the enzymes UBA5, UFC1 and UFL1. Deufmylated by the protease UFSP2. Ufmylation of TRIP4 is promoted by ligand-bound nuclear receptors that compete with UFSP2 for interaction with TRIP4. Nuclear receptors-induced ufmylation promotes the recruitment of additional transcriptional coactivators like EP300 and NCOA1 and therefore the assembly of a coactivator complex facilitating nuclear receptor-mediated transcription.

The protein resides in the nucleus. Its subcellular location is the cytoplasm. It is found in the cytosol. The protein localises to the cytoskeleton. It localises to the microtubule organizing center. The protein resides in the centrosome. Its function is as follows. Transcription coactivator which associates with nuclear receptors, transcriptional coactivators including EP300, CREBBP and NCOA1, and basal transcription factors like TBP and TFIIA to facilitate nuclear receptors-mediated transcription. May thereby play an important role in establishing distinct coactivator complexes under different cellular conditions. Plays a role in thyroid hormone receptor and estrogen receptor transactivation. Also involved in androgen receptor transactivation. Plays a pivotal role in the transactivation of NF-kappa-B, SRF and AP1. Acts as a mediator of transrepression between nuclear receptor and either AP1 or NF-kappa-B. May play a role in the development of neuromuscular junction. May play a role in late myogenic differentiation. Also functions as part of the RQC trigger (RQT) complex that activates the ribosome quality control (RQC) pathway, a pathway that degrades nascent peptide chains during problematic translation. The polypeptide is Activating signal cointegrator 1 (Homo sapiens (Human)).